The following is a 174-amino-acid chain: Actin-related protein 2/3 complex subunit 3 (174 aa).

This sequence belongs to the ARPC3 family. As to quaternary structure, component of the Arp2/3 complex composed of arpB/Arp2, arpC/Arp3, arcA/p41-arc, arcB/p34-arc, arcC/p21-arc, arcD/p20-arc and arcE/p16-arc. Interacts with carmil (via the region between the LRR domain and COOH-terminal proline-rich domain); carmil is required for Arp2/3-dependent actin nucleation. Arp2/3 complex, MyoB, MyoC, and the alpha and beta subunits of capping protein all form a larger complex with carmil.

It is found in the cytoplasm. It localises to the cytoskeleton. The protein resides in the cytosol. Its subcellular location is the cell cortex. The protein localises to the cell projection. It is found in the pseudopodium. Functions as a component of the Arp2/3 complex which is involved in regulation of actin polymerization and together with an activating nucleation-promoting factor (NPF) mediates the formation of branched actin networks. Seems to contact the pointed end of the daughter actin filament. The Arp2/3 complex is involved in organizing the actin system in cell motility and chemotaxis, in phagocytosis and macropinocytosis, at late steps of endosome processing, and in mitosis. In concert with a group of other proteins, the Arp2/3 complex plays a general role in the rapid activation and adaptation of the actin system to its multiple functions. The polypeptide is Actin-related protein 2/3 complex subunit 3 (arcC) (Dictyostelium discoideum (Social amoeba)).